The chain runs to 703 residues: Harmonin-binding protein USHBP1 (703 aa).

Positions 1–15 (MSARATRPRSRRGRH) are enriched in basic residues. 2 disordered regions span residues 1–113 (MSAR…PPGN) and 138–172 (HQPPSHSGPMEFEGTSEGGAGSLGKQEGAGSCQRE). Residues 189–227 (SREDELVRTQASLEAIRAEKETLQKEVQELQDSLLRLEP) adopt a coiled-coil conformation. Positions 228–256 (CPHLSHNQAGGSGSGSSSSEADREPWETQ) are disordered. Residues 289–309 (EMHIMEAQMEQLRGSIEKLKC) adopt a coiled-coil conformation. Residues 396–416 (MDAGAQQNPQPSPEGSSVDKP) form a disordered region. A compositionally biased stretch (polar residues) spans 400–410 (AQQNPQPSPEG). Residues 476–513 (RLEKTQIQQDLVAAREALADLMLRLQLVRREKRGLELR) are a coiled coil. The disordered stretch occupies residues 540-583 (AGGANSSGGHSSGGGSSGDEEEWYQGLPAVPGGTSGIDGGQVGR). The segment covering 572–581 (GTSGIDGGQV) has biased composition (gly residues). A coiled-coil region spans residues 596-681 (ASLTRTLDLQ…QAEEVAVLEA (86 aa)).

Belongs to the MCC family. In terms of assembly, interacts via its C-terminus with the first PDZ domain of USH1C. As to expression, highest level of expression in heart, and moderate to low expression in skeletal muscle, kidney, liver, small intestine, placenta and lung.

The sequence is that of Harmonin-binding protein USHBP1 from Homo sapiens (Human).